Reading from the N-terminus, the 473-residue chain is Photosystem II CP43 reaction center protein (473 aa).

Residues 1 to 14 (MKTLYSLRRFYHVE) constitute a propeptide that is removed on maturation. N-acetylthreonine is present on Thr15. Residue Thr15 is modified to Phosphothreonine. The next 5 helical transmembrane spans lie at 69–93 (LFEVAHFVPEKPMYEQGLILLPHLA), 134–155 (LLGPETLEESFPFFGYVWKDRN), 178–200 (KASYFGGIYDTWAPGGGDVRKIT), 255–275 (KPFAWARRALVWSGEAYLSYS), and 291–312 (WFNNTAYPSEFYGPTGPEASQA). Glu367 is a [CaMn4O5] cluster binding site. A helical transmembrane segment spans residues 447 to 471 (RARAAAAGFEKGIDRDFEPVLSMTP).

Belongs to the PsbB/PsbC family. PsbC subfamily. In terms of assembly, PSII is composed of 1 copy each of membrane proteins PsbA, PsbB, PsbC, PsbD, PsbE, PsbF, PsbH, PsbI, PsbJ, PsbK, PsbL, PsbM, PsbT, PsbX, PsbY, PsbZ, Psb30/Ycf12, at least 3 peripheral proteins of the oxygen-evolving complex and a large number of cofactors. It forms dimeric complexes. Binds multiple chlorophylls and provides some of the ligands for the Ca-4Mn-5O cluster of the oxygen-evolving complex. It may also provide a ligand for a Cl- that is required for oxygen evolution. PSII binds additional chlorophylls, carotenoids and specific lipids. serves as cofactor.

It localises to the plastid. It is found in the chloroplast thylakoid membrane. Its function is as follows. One of the components of the core complex of photosystem II (PSII). It binds chlorophyll and helps catalyze the primary light-induced photochemical processes of PSII. PSII is a light-driven water:plastoquinone oxidoreductase, using light energy to abstract electrons from H(2)O, generating O(2) and a proton gradient subsequently used for ATP formation. The polypeptide is Photosystem II CP43 reaction center protein (Cicer arietinum (Chickpea)).